Consider the following 527-residue polypeptide: D-3-phosphoglycerate dehydrogenase (527 aa).

Residues 149–150 (RV), D169, 228–230 (AAR), and D254 each bind NAD(+). R230 is an active-site residue. E259 is an active-site residue. H278 (proton donor) is an active-site residue. Residue 278–281 (HIAA) coordinates NAD(+). An ACT domain is found at 453–527 (YIISLHEDKP…GIIDATYVEL (75 aa)).

Belongs to the D-isomer specific 2-hydroxyacid dehydrogenase family.

The enzyme catalyses (2R)-3-phosphoglycerate + NAD(+) = 3-phosphooxypyruvate + NADH + H(+). It functions in the pathway amino-acid biosynthesis; L-serine biosynthesis; L-serine from 3-phospho-D-glycerate: step 1/3. In Archaeoglobus fulgidus (strain ATCC 49558 / DSM 4304 / JCM 9628 / NBRC 100126 / VC-16), this protein is D-3-phosphoglycerate dehydrogenase (serA).